A 178-amino-acid polypeptide reads, in one-letter code: Translation initiation factor IF-3 (178 aa).

This sequence belongs to the IF-3 family. As to quaternary structure, monomer.

The protein localises to the cytoplasm. Its function is as follows. IF-3 binds to the 30S ribosomal subunit and shifts the equilibrium between 70S ribosomes and their 50S and 30S subunits in favor of the free subunits, thus enhancing the availability of 30S subunits on which protein synthesis initiation begins. In Legionella pneumophila (strain Paris), this protein is Translation initiation factor IF-3.